We begin with the raw amino-acid sequence, 353 residues long: Peroxisome assembly protein 12-A (353 aa).

At 1–19 (MAERGAHITTTSASDDRPS) the chain is on the peroxisomal matrix side. A helical membrane pass occupies residues 20–47 (IFEVVAQESLMAAARPALHHIVKVLAES). Residues 48–51 (NPSR) are Cytoplasmic-facing. Residues 52-76 (YGTLWRWFDELYTLLDWLLQQHYLS) form a helical membrane-spanning segment. Residues 77–104 (WASASFSENFYGLKRITLGKEVGQRNLP) are Peroxisomal matrix-facing. The helical transmembrane segment at 105-134 (RKEYWKSLLLLVLIPYLRVKLEKIVNRLRE) threads the bilayer. Residues 135 to 139 (EQDYS) are Cytoplasmic-facing. A helical transmembrane segment spans residues 140–178 (IQNPTSFHKRCYKAILASYPFVKLGWEAWFLFYQLRYIL). Residues 179–243 (WNGKNHSPLL…LGAVALSVSS (65 aa)) are Peroxisomal matrix-facing. Residues 244-271 (SLSLGVFFLQFLDWWYSAENQETLKSLN) traverse the membrane as a helical segment. The Cytoplasmic segment spans residues 272-353 (NLPVPPPPIH…HLIKLYTPDG (82 aa)). Residues Cys-298, Cys-301, Cys-319, and Cys-322 each contribute to the Zn(2+) site. The segment at 298 to 337 (CPLCRKVRVNDTALGTSGYVFCYRCAYYYVKTHQRCPVSG) adopts an RING-type; degenerate zinc-finger fold.

It belongs to the pex2/pex10/pex12 family. In terms of assembly, component of the PEX2-PEX10-PEX12 retrotranslocation channel.

It is found in the peroxisome membrane. It participates in protein modification; protein ubiquitination. Functionally, component of a retrotranslocation channel required for peroxisome organization by mediating export of the PEX5 receptor from peroxisomes to the cytosol, thereby promoting PEX5 recycling. The retrotranslocation channel is composed of PEX2, PEX10 and PEX12; each subunit contributing transmembrane segments that coassemble into an open channel that specifically allows the passage of PEX5 through the peroxisomal membrane. PEX12 also regulates PEX5 recycling by activating the E3 ubiquitin-protein ligase activity of PEX10. When PEX5 recycling is compromised, PEX12 stimulates PEX10-mediated polyubiquitination of PEX5, leading to its subsequent degradation. In Xenopus laevis (African clawed frog), this protein is Peroxisome assembly protein 12-A.